The sequence spans 246 residues: Protein crossbronx (246 aa).

The region spanning 20 to 177 (QQEYKILAEY…VQESILESKA (158 aa)) is the UBC core domain.

It belongs to the ubiquitin-conjugating enzyme family. FTS subfamily.

The polypeptide is Protein crossbronx (cbx) (Drosophila grimshawi (Hawaiian fruit fly)).